The chain runs to 306 residues: tRNA dimethylallyltransferase (306 aa).

ATP is bound at residue 9-16 (GPTAIGKT). Residue 11–16 (TAIGKT) coordinates substrate. Residues 34 to 37 (DSMQ) form an interaction with substrate tRNA region.

This sequence belongs to the IPP transferase family. In terms of assembly, monomer. It depends on Mg(2+) as a cofactor.

The enzyme catalyses adenosine(37) in tRNA + dimethylallyl diphosphate = N(6)-dimethylallyladenosine(37) in tRNA + diphosphate. In terms of biological role, catalyzes the transfer of a dimethylallyl group onto the adenine at position 37 in tRNAs that read codons beginning with uridine, leading to the formation of N6-(dimethylallyl)adenosine (i(6)A). The protein is tRNA dimethylallyltransferase of Lactobacillus acidophilus (strain ATCC 700396 / NCK56 / N2 / NCFM).